Consider the following 552-residue polypeptide: MFCIQCEQTIRTPAGNGCSYSQGMCGKLAETSDLQDLLIYILQGVSAYAVKAREFNIIDAEIDTFVPKAFFATLTNVNFDDARLIEYVEQANTYRTRLKDAYEAQCAANGVMVAEMSAPAQLVLATAKPELLAQAPLAAPNRGDVHEDILGLRLLCLYGLKGAAAYMEHARVLDQTDAEVAGSFHEIMAFLGEDSVDVDKLFATSMEIGQLNYKVMAMLDEGETNAFGHPEPTQVNTVAVKGKAILVSGHDMVDLELILKQTEGKGINVFTHGEMLPALAYPEFKKYPHLVGNYGSAWQNQQKEFANFPGAVVMTSNCIIDPNVGNYSDRIFTRSIVGWPGVTHLVGDDFTQVIEKALALDGFIYDEIPHLITIGFARNALMAAAPAVIENVKNGSIKHFFLVGGCDGDKADRSYFTDIATQAPDDSLILTLGCGKYKFNKLEFGDINGIPRLLDIGQCNDSYSAIQLAIALSEAFECEINELPLSLVLSWFEQKAIVVLLTLLSLGVKNIRTGPTPPAFLTENLLNILEEKFGLRNTTTVEADLNTILNVA.

4 residues coordinate [2Fe-2S] cluster: Cys-3, Cys-6, Cys-18, and Cys-25. 8 residues coordinate hybrid [4Fe-2O-2S] cluster: His-250, Glu-274, Cys-318, Cys-406, Cys-434, Cys-459, Glu-493, and Lys-495. The residue at position 406 (Cys-406) is a Cysteine persulfide.

The protein belongs to the HCP family. The cofactor is [2Fe-2S] cluster. Hybrid [4Fe-2O-2S] cluster serves as cofactor.

It is found in the cytoplasm. It catalyses the reaction A + NH4(+) + H2O = hydroxylamine + AH2 + H(+). Its function is as follows. Catalyzes the reduction of hydroxylamine to form NH(3) and H(2)O. In Shewanella woodyi (strain ATCC 51908 / MS32), this protein is Hydroxylamine reductase.